The following is a 526-amino-acid chain: Probable fucosyltransferase 7 (526 aa).

Residues 1-4 (MKTK) are Cytoplasmic-facing. The chain crosses the membrane as a helical; Signal-anchor for type II membrane protein span at residues 5-25 (LMITIFSCLLLWSMLLLLSFS). Residues 26–526 (NIFKHQLLGA…KLVDDTKNEL (501 aa)) lie on the Lumenal side of the membrane. N211, N215, and N363 each carry an N-linked (GlcNAc...) asparagine glycan.

It belongs to the glycosyltransferase 37 family. In terms of tissue distribution, expressed in roots, leaves, stems and seedlings.

The protein localises to the golgi apparatus. It is found in the golgi stack membrane. It participates in protein modification; protein glycosylation. Functionally, may be involved in cell wall biosynthesis. May act as a fucosyltransferase. This chain is Probable fucosyltransferase 7 (FUT7), found in Arabidopsis thaliana (Mouse-ear cress).